The following is a 172-amino-acid chain: MIIYRDCISQDEMFSDIYKITEVANGLCLEVEGKMVSRKEGEIDDALIGGNASAEGPEGDGTEATVITGVDIVMNHHLQETSFTKESYKKYIKDYMKSIKARLEETKPERVKPFMTGAAEQVKHILGNFKNYQFFVGENMNPDGMVGLLDFREDGVTPYMIFFKDGLEMEKC.

One can recognise a TCTP domain in the interval methionine 1–cysteine 172.

This sequence belongs to the TCTP family. In terms of tissue distribution, expressed by the venom gland.

It localises to the secreted. In terms of biological role, venom protein that causes edema, enhances vascular permeability and is likely related to the inflammatory activity of the venom. This chain is Translationally-controlled tumor protein homolog, found in Crotalus adamanteus (Eastern diamondback rattlesnake).